The primary structure comprises 531 residues: Cytochrome P450 monooxygenase peniB (531 aa).

The chain crosses the membrane as a helical span at residues Ile30–Phe48. A heme-binding site is contributed by Cys445.

Belongs to the cytochrome P450 family. It depends on heme as a cofactor.

Its subcellular location is the membrane. It carries out the reaction silphinene-15-oate + 2 reduced [NADPH--hemoprotein reductase] + 2 O2 = gamma-lactone-2-keto[5.5.5.5]fenestrane + 2 oxidized [NADPH--hemoprotein reductase] + 3 H2O + H(+). It functions in the pathway secondary metabolite biosynthesis; terpenoid biosynthesis. Functionally, cytochrome P450 monooxygenase; part of the gene cluster that mediates the biosynthesis of penifulvin A, a potent insecticidal sesquiterpene that features a [5.5.5.6]dioxafenestrane ring. Within the pathway, peniB catalyzes the multi-step oxidation of silphinene to synthesize gamma-lactone-2-keto[5.5.5.5]fenestrane, including oxidation of the C15 methylgroup in silphinene to form silphinene-15-oic acid, activationof the C1-C2 double bond to form the gamma-lactone-2-hydroxy[5.5.5.5]fenestrane, and dehydrogenation of the hydroxy group at C2 of gamma-lactone-2-hydroxy[5.5.5.5]fenestrane to generate gamma-lactone-2-keto[5.5.5.5]fenestrane. The first step of the pathway is performed by the sesquiterpene cyclase peniA that generates the angular triquinane scaffold silphinene via cyclization of the linear farnesyl pyrophosphate (FPP). The cytochrome P450 monooxygenase peniB and the flavin-dependent monooxygenase peniC then catalyze a series of oxidation reactions to transform silphinene into penifulvin A. The polypeptide is Cytochrome P450 monooxygenase peniB (Penicillium patulum (Penicillium griseofulvum)).